A 155-amino-acid polypeptide reads, in one-letter code: SsrA-binding protein (155 aa).

Belongs to the SmpB family.

It localises to the cytoplasm. Required for rescue of stalled ribosomes mediated by trans-translation. Binds to transfer-messenger RNA (tmRNA), required for stable association of tmRNA with ribosomes. tmRNA and SmpB together mimic tRNA shape, replacing the anticodon stem-loop with SmpB. tmRNA is encoded by the ssrA gene; the 2 termini fold to resemble tRNA(Ala) and it encodes a 'tag peptide', a short internal open reading frame. During trans-translation Ala-aminoacylated tmRNA acts like a tRNA, entering the A-site of stalled ribosomes, displacing the stalled mRNA. The ribosome then switches to translate the ORF on the tmRNA; the nascent peptide is terminated with the 'tag peptide' encoded by the tmRNA and targeted for degradation. The ribosome is freed to recommence translation, which seems to be the essential function of trans-translation. The polypeptide is SsrA-binding protein (Alkaliphilus oremlandii (strain OhILAs) (Clostridium oremlandii (strain OhILAs))).